A 292-amino-acid chain; its full sequence is Acetylglutamate kinase (292 aa).

Substrate contacts are provided by residues 64 to 65 (GG), Arg86, and Asn190.

It belongs to the acetylglutamate kinase family. ArgB subfamily.

The protein resides in the cytoplasm. It catalyses the reaction N-acetyl-L-glutamate + ATP = N-acetyl-L-glutamyl 5-phosphate + ADP. Its pathway is amino-acid biosynthesis; L-arginine biosynthesis; N(2)-acetyl-L-ornithine from L-glutamate: step 2/4. In terms of biological role, catalyzes the ATP-dependent phosphorylation of N-acetyl-L-glutamate. This chain is Acetylglutamate kinase, found in Geobacter sp. (strain M21).